We begin with the raw amino-acid sequence, 673 residues long: L-type lectin-domain containing receptor kinase SIT2 (673 aa).

A signal peptide spans 1–27 (MVLPKPEMPFFVLLLFLGLGCLRPAAA). At 28 to 296 (TDERFVFNGF…FPKPRSKTLE (269 aa)) the chain is on the extracellular side. Residues 32-270 (FVFNGFTGAN…VLGWSFKMNG (239 aa)) are legume-lectin like. 9 N-linked (GlcNAc...) asparagine glycosylation sites follow: asparagine 41, asparagine 60, asparagine 82, asparagine 118, asparagine 138, asparagine 191, asparagine 214, asparagine 235, and asparagine 276. Residues 297–317 (IVLPIASAVLVFAVAAAVFVF) traverse the membrane as a helical segment. Residues 318–673 (MRRRRMFSEL…GTFSDLSGGR (356 aa)) lie on the Cytoplasmic side of the membrane. Positions 352–631 (FSDKRLLGIG…LEGDVPLPEL (280 aa)) constitute a Protein kinase domain. Residues 358–366 (LGIGGFGRV) and lysine 381 each bind ATP. Aspartate 477 acts as the Proton acceptor in catalysis.

This sequence in the C-terminal section; belongs to the protein kinase superfamily. Ser/Thr protein kinase family. In the N-terminal section; belongs to the leguminous lectin family. As to expression, mainly expressed in root epidermal cells.

It is found in the cell membrane. It carries out the reaction L-seryl-[protein] + ATP = O-phospho-L-seryl-[protein] + ADP + H(+). The enzyme catalyses L-threonyl-[protein] + ATP = O-phospho-L-threonyl-[protein] + ADP + H(+). In terms of biological role, lectin-domain containing receptor kinase involved in salt stress response. Acts as a negative regulator of salt tolerance. This is L-type lectin-domain containing receptor kinase SIT2 from Oryza sativa subsp. japonica (Rice).